A 353-amino-acid chain; its full sequence is Photosystem II protein D1 (353 aa).

Position 2 is an N-acetylthreonine (Thr-2). Thr-2 carries the post-translational modification Phosphothreonine. 3 helical membrane-spanning segments follow: residues 29–46, 118–133, and 142–156; these read YIGW…TATS, HFLL…EWEL, and WIAV…AAAA. Residue His-118 participates in chlorophyll a binding. Residue Tyr-126 participates in pheophytin a binding. Positions 170 and 189 each coordinate [CaMn4O5] cluster. Residues 197–218 traverse the membrane as a helical segment; the sequence is FHMLGVAGVFGGSLFSAMHGSL. His-198 provides a ligand contact to chlorophyll a. A quinone-binding positions include His-215 and 264-265; that span reads SF. His-215 is a binding site for Fe cation. A Fe cation-binding site is contributed by His-272. A helical membrane pass occupies residues 274–288; the sequence is FLAAWPVVGIWFTAL. The [CaMn4O5] cluster site is built by His-332, Glu-333, Asp-342, and Ala-344. A propeptide spanning residues 345–353 is cleaved from the precursor; that stretch reads AVEAPSTNG.

The protein belongs to the reaction center PufL/M/PsbA/D family. As to quaternary structure, PSII is composed of 1 copy each of membrane proteins PsbA, PsbB, PsbC, PsbD, PsbE, PsbF, PsbH, PsbI, PsbJ, PsbK, PsbL, PsbM, PsbT, PsbX, PsbY, PsbZ, Psb30/Ycf12, at least 3 peripheral proteins of the oxygen-evolving complex and a large number of cofactors. It forms dimeric complexes. The cofactor is The D1/D2 heterodimer binds P680, chlorophylls that are the primary electron donor of PSII, and subsequent electron acceptors. It shares a non-heme iron and each subunit binds pheophytin, quinone, additional chlorophylls, carotenoids and lipids. D1 provides most of the ligands for the Mn4-Ca-O5 cluster of the oxygen-evolving complex (OEC). There is also a Cl(-1) ion associated with D1 and D2, which is required for oxygen evolution. The PSII complex binds additional chlorophylls, carotenoids and specific lipids.. In terms of processing, tyr-161 forms a radical intermediate that is referred to as redox-active TyrZ, YZ or Y-Z. C-terminally processed by CTPA; processing is essential to allow assembly of the oxygen-evolving complex and thus photosynthetic growth.

It is found in the plastid. The protein localises to the chloroplast thylakoid membrane. It carries out the reaction 2 a plastoquinone + 4 hnu + 2 H2O = 2 a plastoquinol + O2. Its function is as follows. Photosystem II (PSII) is a light-driven water:plastoquinone oxidoreductase that uses light energy to abstract electrons from H(2)O, generating O(2) and a proton gradient subsequently used for ATP formation. It consists of a core antenna complex that captures photons, and an electron transfer chain that converts photonic excitation into a charge separation. The D1/D2 (PsbA/PsbD) reaction center heterodimer binds P680, the primary electron donor of PSII as well as several subsequent electron acceptors. The polypeptide is Photosystem II protein D1 (Panax ginseng (Korean ginseng)).